Consider the following 170-residue polypeptide: MATQVKKELVAELVEKIKKAQSVVFVDYQGIKVNEETLLRKQMRENGAEYLVAKNRLFKIALKESGVEDSFDEILEGSTAFAFGYNDPVAPAKAVFDLAKAKAKAKLDVFKIKGGYLTGKKVSVKEVEELAKLPSREQLLSMLLNSMLGPIRKLAYATVAIADKKEGSAE.

It belongs to the universal ribosomal protein uL10 family. In terms of assembly, part of the ribosomal stalk of the 50S ribosomal subunit. The N-terminus interacts with L11 and the large rRNA to form the base of the stalk. The C-terminus forms an elongated spine to which L12 dimers bind in a sequential fashion forming a multimeric L10(L12)X complex.

Its function is as follows. Forms part of the ribosomal stalk, playing a central role in the interaction of the ribosome with GTP-bound translation factors. The protein is Large ribosomal subunit protein uL10 of Fusobacterium nucleatum subsp. nucleatum (strain ATCC 25586 / DSM 15643 / BCRC 10681 / CIP 101130 / JCM 8532 / KCTC 2640 / LMG 13131 / VPI 4355).